The chain runs to 419 residues: UDP-N-acetylglucosamine 1-carboxyvinyltransferase (419 aa).

Residue 22 to 23 (KN) participates in phosphoenolpyruvate binding. Residue arginine 91 coordinates UDP-N-acetyl-alpha-D-glucosamine. Cysteine 115 (proton donor) is an active-site residue. Residue cysteine 115 is modified to 2-(S-cysteinyl)pyruvic acid O-phosphothioketal. UDP-N-acetyl-alpha-D-glucosamine-binding positions include 120–124 (RPVDL), 160–163 (KVSV), aspartate 305, and isoleucine 327.

Belongs to the EPSP synthase family. MurA subfamily.

The protein localises to the cytoplasm. The enzyme catalyses phosphoenolpyruvate + UDP-N-acetyl-alpha-D-glucosamine = UDP-N-acetyl-3-O-(1-carboxyvinyl)-alpha-D-glucosamine + phosphate. The protein operates within cell wall biogenesis; peptidoglycan biosynthesis. Its function is as follows. Cell wall formation. Adds enolpyruvyl to UDP-N-acetylglucosamine. The sequence is that of UDP-N-acetylglucosamine 1-carboxyvinyltransferase from Klebsiella pneumoniae subsp. pneumoniae (strain ATCC 700721 / MGH 78578).